A 356-amino-acid chain; its full sequence is MITKQQVLEFLKNYDLDNITIATVCSHSSLQIFDGARKEGFRTMGICVGKPPKFYEAFPRAKPDEYLIVESYEDIMNKVEELRKKNVIIIPHGSFVAYLGTENFAEMAVPTFGNRAVLEWESDRSKEREWLLGAGIHMPGKIDDPRDINGPVMVKYDGAKGGKGFFVAKTYEEFDELVDRTQKYTIQEFITGTRYYLHYFYSPIRNEGYTLSEGSLELLSMDRRVESNADEIFRLGSPRELIEAGIRPTYVVTGNVPLVARESLLPLIFSLGERVVEESLGLFGGMIGAFCLETVFTDELEIKVFEISARIVAGTNLYISGSPYADLIQEDLSTGRRIAQEIKEAVRKNQLDKIIS.

Residues His-27 and Ser-94 each coordinate 5-amino-1-(5-phospho-beta-D-ribosyl)imidazole-4-carboxamide. The ATP-grasp domain maps to 101–333; it reads TENFAEMAVP…YADLIQEDLS (233 aa). Residues 145 to 196 and Glu-226 contribute to the ATP site; that span reads PRDI…TRYY. Asn-255 contacts 5-amino-1-(5-phospho-beta-D-ribosyl)imidazole-4-carboxamide. 2 residues coordinate Mg(2+): Glu-293 and Glu-306.

Belongs to the phosphohexose mutase family. Mg(2+) serves as cofactor. Mn(2+) is required as a cofactor.

It catalyses the reaction 5-amino-1-(5-phospho-beta-D-ribosyl)imidazole-4-carboxamide + formate + ATP = 5-formamido-1-(5-phospho-D-ribosyl)imidazole-4-carboxamide + ADP + phosphate. It participates in purine metabolism; IMP biosynthesis via de novo pathway; 5-formamido-1-(5-phospho-D-ribosyl)imidazole-4-carboxamide from 5-amino-1-(5-phospho-D-ribosyl)imidazole-4-carboxamide (formate route): step 1/1. Catalyzes the ATP- and formate-dependent formylation of 5-aminoimidazole-4-carboxamide-1-beta-d-ribofuranosyl 5'-monophosphate (AICAR) to 5-formaminoimidazole-4-carboxamide-1-beta-d-ribofuranosyl 5'-monophosphate (FAICAR) in the absence of folates. This is 5-formaminoimidazole-4-carboxamide-1-(beta)-D-ribofuranosyl 5'-monophosphate synthetase 1 from Methanosarcina mazei (strain ATCC BAA-159 / DSM 3647 / Goe1 / Go1 / JCM 11833 / OCM 88) (Methanosarcina frisia).